The chain runs to 153 residues: Small ribosomal subunit protein uS12m (153 aa).

The transit peptide at 1–20 directs the protein to the mitochondrion; that stretch reads MLSRFMSNTWCTPLRQAQRL.

Belongs to the universal ribosomal protein uS12 family. As to quaternary structure, component of the mitochondrial small ribosomal subunit (mt-SSU). Mature yeast 74S mitochondrial ribosomes consist of a small (37S) and a large (54S) subunit. The 37S small subunit contains a 15S ribosomal RNA (15S mt-rRNA) and 34 different proteins. The 54S large subunit contains a 21S rRNA (21S mt-rRNA) and 46 different proteins. uS12m forms part of the decoding center of the mt-SSU.

It is found in the mitochondrion. In terms of biological role, component of the mitochondrial ribosome (mitoribosome), a dedicated translation machinery responsible for the synthesis of mitochondrial genome-encoded proteins, including at least some of the essential transmembrane subunits of the mitochondrial respiratory chain. The mitoribosomes are attached to the mitochondrial inner membrane and translation products are cotranslationally integrated into the membrane. uS12m is required for respiratory growth. The sequence is that of Small ribosomal subunit protein uS12m (MRPS12) from Saccharomyces cerevisiae (strain ATCC 204508 / S288c) (Baker's yeast).